The primary structure comprises 287 residues: Nucleotide-binding protein VIBHAR_03667 (287 aa).

8–15 (GHSGAGKS) contributes to the ATP binding site. 56-59 (DIRN) is a GTP binding site.

Belongs to the RapZ-like family.

In terms of biological role, displays ATPase and GTPase activities. The polypeptide is Nucleotide-binding protein VIBHAR_03667 (Vibrio campbellii (strain ATCC BAA-1116)).